A 261-amino-acid chain; its full sequence is 3-hydroxyacyl-CoA dehydrogenase type-2 (261 aa).

Residue A2 is modified to N-acetylalanine. Positions 20, 22, and 41 each coordinate NAD(+). K53 carries the post-translational modification N6-acetyllysine; alternate. An N6-succinyllysine; alternate modification is found at K53. NAD(+)-binding residues include D64 and V65. K69 is modified (N6-acetyllysine). C91 serves as a coordination point for NAD(+). An N6-acetyllysine mark is found at K99 and K105. S155 serves as a coordination point for substrate. NAD(+)-binding residues include Y168, K172, F201, and T203. Catalysis depends on Y168, which acts as the Proton acceptor. An N6-acetyllysine; alternate modification is found at K212. K212 is modified (N6-succinyllysine; alternate).

Belongs to the short-chain dehydrogenases/reductases (SDR) family. Homotetramer. Component of mitochondrial ribonuclease P, a complex composed of TRMT10C/MRPP1, HSD17B10/MRPP2 and PRORP/MRPP3. Interacts with TRMT10C/MRPP1; forming the MRPP1-MRPP2 subcomplex of the mitochondrial ribonuclease P complex. As to expression, ubiquitously expressed in normal tissues but is overexpressed in neurons affected in AD.

The protein resides in the mitochondrion. It localises to the mitochondrion matrix. It is found in the mitochondrion nucleoid. It carries out the reaction a (3S)-3-hydroxyacyl-CoA + NAD(+) = a 3-oxoacyl-CoA + NADH + H(+). The enzyme catalyses (2S,3S)-3-hydroxy-2-methylbutanoyl-CoA + NAD(+) = 2-methyl-3-oxobutanoyl-CoA + NADH + H(+). It catalyses the reaction testosterone + NAD(+) = androst-4-ene-3,17-dione + NADH + H(+). The catalysed reaction is 5alpha-androstane-3alpha,17beta-diol + NAD(+) = 17beta-hydroxy-5alpha-androstan-3-one + NADH + H(+). It carries out the reaction 17beta-estradiol + NAD(+) = estrone + NADH + H(+). The enzyme catalyses cholate + NAD(+) = 3alpha,12alpha-dihydroxy-7-oxo-5beta-cholanate + NADH + H(+). It catalyses the reaction (3S)-3-hydroxybutanoyl-CoA + NAD(+) = acetoacetyl-CoA + NADH + H(+). The catalysed reaction is (3S)-hydroxyoctanoyl-CoA + NAD(+) = 3-oxooctanoyl-CoA + NADH + H(+). It carries out the reaction (3S)-hydroxyhexadecanoyl-CoA + NAD(+) = 3-oxohexadecanoyl-CoA + NADH + H(+). The enzyme catalyses 17beta-hydroxy-5alpha-androstan-3-one + NAD(+) = 5alpha-androstan-3,17-dione + NADH + H(+). It catalyses the reaction 5alpha-pregnan-20beta-ol-3-one + NAD(+) = 5alpha-pregnane-3,20-dione + NADH + H(+). The catalysed reaction is 3alpha-hydroxy-5alpha-pregnan-20-one + NAD(+) = 5alpha-pregnane-3,20-dione + NADH + H(+). It carries out the reaction cortisone + NAD(+) = 17alpha-hydroxypregn-4-en-3,11,20-trione-21-al + NADH + H(+). The enzyme catalyses 11-dehydrocorticosterone + NAD(+) = pregn-4-ene-3,11,20,21-tetraone + NADH + H(+). It catalyses the reaction cortisol + NAD(+) = 11beta,17alpha-dihydroxypregn-4-ene-3,20,21-trione + NADH + H(+). The catalysed reaction is chenodeoxycholate + NAD(+) = 7-oxolithocholate + NADH + H(+). It carries out the reaction ursodeoxycholate + NAD(+) = 7-oxolithocholate + NADH + H(+). The enzyme catalyses 3beta,7beta-dihydroxy-5beta-cholan-24-oate + NAD(+) = 3beta-hydroxy-7-oxo-5beta-cholan-24-oate + NADH + H(+). It functions in the pathway amino-acid degradation; L-isoleucine degradation. The protein operates within lipid metabolism; fatty acid beta-oxidation. Its pathway is steroid metabolism. It participates in lipid metabolism; bile acid biosynthesis. Its activity is regulated as follows. The phospholipase C-like activity toward cardiolipin is inhibited by amyloid-beta peptide. Mitochondrial dehydrogenase involved in pathways of fatty acid, branched-chain amino acid and steroid metabolism. Acts as (S)-3-hydroxyacyl-CoA dehydrogenase in mitochondrial fatty acid beta-oxidation, a major degradation pathway of fatty acids. Catalyzes the third step in the beta-oxidation cycle, namely the reversible conversion of (S)-3-hydroxyacyl-CoA to 3-ketoacyl-CoA. Preferentially accepts straight medium- and short-chain acyl-CoA substrates with highest efficiency for (3S)-hydroxybutanoyl-CoA. Acts as 3-hydroxy-2-methylbutyryl-CoA dehydrogenase in branched-chain amino acid catabolic pathway. Catalyzes the oxidation of 3-hydroxy-2-methylbutanoyl-CoA into 2-methyl-3-oxobutanoyl-CoA, a step in isoleucine degradation pathway. Has hydroxysteroid dehydrogenase activity toward steroid hormones and bile acids. Catalyzes the oxidation of 3alpha-, 17beta-, 20beta- and 21-hydroxysteroids and 7alpha- and 7beta-hydroxy bile acids. Oxidizes allopregnanolone/brexanolone at the 3alpha-hydroxyl group, which is known to be critical for the activation of gamma-aminobutyric acid receptors (GABAARs) chloride channel. Has phospholipase C-like activity toward cardiolipin and its oxidized species. Likely oxidizes the 2'-hydroxyl in the head group of cardiolipin to form a ketone intermediate that undergoes nucleophilic attack by water and fragments into diacylglycerol, dihydroxyacetone and orthophosphate. Has higher affinity for cardiolipin with oxidized fatty acids and may degrade these species during the oxidative stress response to protect cells from apoptosis. By interacting with intracellular amyloid-beta, it may contribute to the neuronal dysfunction associated with Alzheimer disease (AD). Essential for structural and functional integrity of mitochondria. In terms of biological role, in addition to mitochondrial dehydrogenase activity, moonlights as a component of mitochondrial ribonuclease P, a complex that cleaves tRNA molecules in their 5'-ends. Together with TRMT10C/MRPP1, forms a subcomplex of the mitochondrial ribonuclease P, named MRPP1-MRPP2 subcomplex, which displays functions that are independent of the ribonuclease P activity. The MRPP1-MRPP2 subcomplex catalyzes the formation of N(1)-methylguanine and N(1)-methyladenine at position 9 (m1G9 and m1A9, respectively) in tRNAs; HSD17B10/MRPP2 acting as a non-catalytic subunit. The MRPP1-MRPP2 subcomplex also acts as a tRNA maturation platform: following 5'-end cleavage by the mitochondrial ribonuclease P complex, the MRPP1-MRPP2 subcomplex enhances the efficiency of 3'-processing catalyzed by ELAC2, retains the tRNA product after ELAC2 processing and presents the nascent tRNA to the mitochondrial CCA tRNA nucleotidyltransferase TRNT1 enzyme. Associates with mitochondrial DNA complexes at the nucleoids to initiate RNA processing and ribosome assembly. The sequence is that of 3-hydroxyacyl-CoA dehydrogenase type-2 (HSD17B10) from Homo sapiens (Human).